A 703-amino-acid polypeptide reads, in one-letter code: DNA ligase (703 aa).

The tract at residues M1–A20 is disordered. The span at S9–A20 shows a compositional bias: low complexity. NAD(+) contacts are provided by residues D53 to D57, S102 to I103, and E139. K141 acts as the N6-AMP-lysine intermediate in catalysis. 4 residues coordinate NAD(+): R162, E200, K321, and K345. Zn(2+) is bound by residues C439, C442, C457, and C463. The BRCT domain occupies Q622–R703.

Belongs to the NAD-dependent DNA ligase family. LigA subfamily. It depends on Mg(2+) as a cofactor. Mn(2+) serves as cofactor.

It carries out the reaction NAD(+) + (deoxyribonucleotide)n-3'-hydroxyl + 5'-phospho-(deoxyribonucleotide)m = (deoxyribonucleotide)n+m + AMP + beta-nicotinamide D-nucleotide.. Functionally, DNA ligase that catalyzes the formation of phosphodiester linkages between 5'-phosphoryl and 3'-hydroxyl groups in double-stranded DNA using NAD as a coenzyme and as the energy source for the reaction. It is essential for DNA replication and repair of damaged DNA. The protein is DNA ligase of Delftia acidovorans (strain DSM 14801 / SPH-1).